Here is a 132-residue protein sequence, read N- to C-terminus: Small ribosomal subunit protein uS8 (132 aa).

The protein belongs to the universal ribosomal protein uS8 family. Part of the 30S ribosomal subunit. Contacts proteins S5 and S12.

In terms of biological role, one of the primary rRNA binding proteins, it binds directly to 16S rRNA central domain where it helps coordinate assembly of the platform of the 30S subunit. The chain is Small ribosomal subunit protein uS8 from Brucella ovis (strain ATCC 25840 / 63/290 / NCTC 10512).